Consider the following 257-residue polypeptide: Zinc transporter ZupT (257 aa).

The next 8 membrane-spanning stretches (helical) occupy residues 5–25, 32–52, 61–81, 109–129, 137–157, 171–191, 195–215, and 236–256; these read LILTLLAGAATFIGAILGVIG, VLAFSLGFAAGIMLLISLMEM, GMSPVMGYGMFVVGLLGYFAL, AILLTLGISLHNFPEGVATYV, LGFGIALAVALHNIPEGLAVA, ILWAGISGLAEILGGVLTWLI, MISPVVMAAIMAAVAGIMVAL, and GVLCGMSVMGLSLVLLQTAGF. The Fe(2+) site is built by Asn120 and Glu123. Residues Glu123 and His148 each contribute to the Zn(2+) site. 3 residues coordinate Fe(2+): Asn149, Glu152, and Glu181. Position 152 (Glu152) interacts with Zn(2+).

Belongs to the ZIP transporter (TC 2.A.5) family. ZupT subfamily.

It is found in the cell inner membrane. It carries out the reaction Zn(2+)(in) = Zn(2+)(out). Its function is as follows. Mediates zinc uptake. May also transport other divalent cations. The protein is Zinc transporter ZupT of Enterobacter sp. (strain 638).